The following is a 307-amino-acid chain: UDP-3-O-acyl-N-acetylglucosamine deacetylase (307 aa).

Residues histidine 78, histidine 241, and aspartate 245 each contribute to the Zn(2+) site. The active-site Proton donor is the histidine 268.

This sequence belongs to the LpxC family. It depends on Zn(2+) as a cofactor.

The catalysed reaction is a UDP-3-O-[(3R)-3-hydroxyacyl]-N-acetyl-alpha-D-glucosamine + H2O = a UDP-3-O-[(3R)-3-hydroxyacyl]-alpha-D-glucosamine + acetate. Its pathway is glycolipid biosynthesis; lipid IV(A) biosynthesis; lipid IV(A) from (3R)-3-hydroxytetradecanoyl-[acyl-carrier-protein] and UDP-N-acetyl-alpha-D-glucosamine: step 2/6. Functionally, catalyzes the hydrolysis of UDP-3-O-myristoyl-N-acetylglucosamine to form UDP-3-O-myristoylglucosamine and acetate, the committed step in lipid A biosynthesis. This is UDP-3-O-acyl-N-acetylglucosamine deacetylase from Acidovorax sp. (strain JS42).